A 741-amino-acid polypeptide reads, in one-letter code: 1,4-alpha-glucan branching enzyme GlgB (741 aa).

Residue D420 is the Nucleophile of the active site. The active-site Proton donor is E473.

This sequence belongs to the glycosyl hydrolase 13 family. GlgB subfamily. In terms of assembly, monomer.

It carries out the reaction Transfers a segment of a (1-&gt;4)-alpha-D-glucan chain to a primary hydroxy group in a similar glucan chain.. The protein operates within glycan biosynthesis; glycogen biosynthesis. Its function is as follows. Catalyzes the formation of the alpha-1,6-glucosidic linkages in glycogen by scission of a 1,4-alpha-linked oligosaccharide from growing alpha-1,4-glucan chains and the subsequent attachment of the oligosaccharide to the alpha-1,6 position. In Pseudomonas syringae pv. tomato (strain ATCC BAA-871 / DC3000), this protein is 1,4-alpha-glucan branching enzyme GlgB.